A 214-amino-acid chain; its full sequence is Adenylate kinase (214 aa).

10-15 (GAGKGT) serves as a coordination point for ATP. The NMP stretch occupies residues 30 to 59 (STGDLLREEIANNTELGKQAKKLIDGGNLV). Residues Thr31, Arg36, 57–59 (NLV), 83–86 (GFPR), and Gln90 contribute to the AMP site. Residues 124-161 (LRRQCKNCGNIFNLRFIKNFDGKCPKCGSTDIYQRADD) form an LID region. Arg125 is an ATP binding site. Positions 128 and 131 each coordinate Zn(2+). Residue 134-135 (IF) participates in ATP binding. Cys147 and Cys150 together coordinate Zn(2+). Positions 158 and 169 each coordinate AMP. Residue Lys197 coordinates ATP.

This sequence belongs to the adenylate kinase family. Monomer.

It is found in the cytoplasm. It carries out the reaction AMP + ATP = 2 ADP. It functions in the pathway purine metabolism; AMP biosynthesis via salvage pathway; AMP from ADP: step 1/1. In terms of biological role, catalyzes the reversible transfer of the terminal phosphate group between ATP and AMP. Plays an important role in cellular energy homeostasis and in adenine nucleotide metabolism. The polypeptide is Adenylate kinase (Elusimicrobium minutum (strain Pei191)).